The following is a 286-amino-acid chain: Small ribosomal subunit protein uS2 (286 aa).

The tract at residues 231 to 286 (ERAQAEAKAAAGDNDAPVSSEGESTEVASDAASTASETTATSSDESAAESSEAESK) is disordered. Over residues 255–280 (TEVASDAASTASETTATSSDESAAES) the composition is skewed to low complexity.

This sequence belongs to the universal ribosomal protein uS2 family.

This Corynebacterium kroppenstedtii (strain DSM 44385 / JCM 11950 / CIP 105744 / CCUG 35717) protein is Small ribosomal subunit protein uS2.